The sequence spans 242 residues: Small ribosomal subunit protein uS2 (242 aa).

The protein belongs to the universal ribosomal protein uS2 family.

This chain is Small ribosomal subunit protein uS2, found in Shewanella frigidimarina (strain NCIMB 400).